The sequence spans 438 residues: uncharacterized protein (438 aa).

A signal peptide spans 1 to 19 (MKKLLLAASIICLASAGLA).

This is an uncharacterized protein from Rickettsia conorii (strain ATCC VR-613 / Malish 7).